The primary structure comprises 486 residues: Malonate-semialdehyde dehydrogenase (486 aa).

The NAD(+) site is built by phenylalanine 154, lysine 178, glutamate 181, arginine 182, and serine 231. The active-site Nucleophile is cysteine 286. Glutamate 386 contributes to the NAD(+) binding site.

Belongs to the aldehyde dehydrogenase family. IolA subfamily. In terms of assembly, homotetramer.

The catalysed reaction is 3-oxopropanoate + NAD(+) + CoA + H2O = hydrogencarbonate + acetyl-CoA + NADH + H(+). It catalyses the reaction 2-methyl-3-oxopropanoate + NAD(+) + CoA + H2O = propanoyl-CoA + hydrogencarbonate + NADH + H(+). It functions in the pathway polyol metabolism; myo-inositol degradation into acetyl-CoA; acetyl-CoA from myo-inositol: step 7/7. Catalyzes the oxidation of malonate semialdehyde (MSA) and methylmalonate semialdehyde (MMSA) into acetyl-CoA and propanoyl-CoA, respectively. Is involved in a myo-inositol catabolic pathway. Bicarbonate, and not CO2, is the end-product of the enzymatic reaction. The polypeptide is Malonate-semialdehyde dehydrogenase (Bacillus cereus (strain ATCC 14579 / DSM 31 / CCUG 7414 / JCM 2152 / NBRC 15305 / NCIMB 9373 / NCTC 2599 / NRRL B-3711)).